The chain runs to 149 residues: SsrA-binding protein (149 aa).

Residues 121–149 are disordered; the sequence is GKKQHDKRAAEKDREWQREKQRLVRSAQH. A compositionally biased stretch (basic and acidic residues) spans 127 to 142; it reads KRAAEKDREWQREKQR.

It belongs to the SmpB family.

The protein resides in the cytoplasm. Required for rescue of stalled ribosomes mediated by trans-translation. Binds to transfer-messenger RNA (tmRNA), required for stable association of tmRNA with ribosomes. tmRNA and SmpB together mimic tRNA shape, replacing the anticodon stem-loop with SmpB. tmRNA is encoded by the ssrA gene; the 2 termini fold to resemble tRNA(Ala) and it encodes a 'tag peptide', a short internal open reading frame. During trans-translation Ala-aminoacylated tmRNA acts like a tRNA, entering the A-site of stalled ribosomes, displacing the stalled mRNA. The ribosome then switches to translate the ORF on the tmRNA; the nascent peptide is terminated with the 'tag peptide' encoded by the tmRNA and targeted for degradation. The ribosome is freed to recommence translation, which seems to be the essential function of trans-translation. The sequence is that of SsrA-binding protein from Thiobacillus denitrificans (strain ATCC 25259 / T1).